The following is a 1909-amino-acid chain: Endoribonuclease Dicer homolog 1 (1909 aa).

Positions 99–177 (TVKENGLQKN…NNKKKRECNN (79 aa)) are disordered. A compositionally biased stretch (basic and acidic residues) spans 110–124 (GKRDEFSKEEGDKDR). Residues 131–146 (SYQSERSNLSGRGHVN) are compositionally biased toward polar residues. Basic and acidic residues predominate over residues 147 to 177 (NSREGDRFMNRKRTRNWDEAGNNKKKRECNN). The 178-residue stretch at 256 to 433 (VLEQAKAKNT…QVDCAIKIRN (178 aa)) folds into the Helicase ATP-binding domain. 269–276 (LETGAGKT) contributes to the ATP binding site. Positions 378–381 (DECH) match the DECH box motif. One can recognise a Helicase C-terminal domain in the interval 651–812 (SLIKLLLKYQ…RTDLSHLKDT (162 aa)). One can recognise a Dicer dsRNA-binding fold domain in the interval 840–935 (AVGLVHFYCS…LPDKGSGQDA (96 aa)). A disordered region spans residues 929 to 952 (KGSGQDAEKADQDDEGEPVPGTAR). A PAZ domain is found at 1189–1318 (EVEEDLSKGK…LPPELCVVHP (130 aa)). RNase III domains are found at residues 1342-1518 (LAVQ…VEGG) and 1559-1707 (FVGL…LDSG). Mg(2+) contacts are provided by E1597, D1693, and E1696. DRBM domains are found at residues 1733–1796 (HPVR…ALKE) and 1831–1906 (FTRQ…LLNK). A disordered region spans residues 1801-1831 (ESKEKHINNGNAGEDQGENENGNKKNGHQPF).

The protein belongs to the helicase family. Dicer subfamily. As to quaternary structure, interacts (via N-terminus) with DDL. Interacts (via DRBM domains) with DRB1, DRB2 and DRB5. May interact with AGO1 or AGO10 through their common PAZ domains. It depends on Mg(2+) as a cofactor. Mn(2+) is required as a cofactor. Highly expressed in flowers and seeds and detected in leaves and stems. Found in ovule integuments, inflorescence and floral meristems, stigma of flowers until just before pollination, vasculature of the funiculus, and embryo.

Its subcellular location is the nucleus. Ribonuclease (RNase) III involved in RNA-mediated post-transcriptional gene silencing (PTGS). Functions in the microRNAs (miRNAs) biogenesis pathway by cleaving primary miRNAs (pri-miRNAs) and precursor miRNAs (pre-miRNAs). Functions with DRB1/HYL1 and SERRATE proteins for accurate pri-miRNAs to miRNAs processing. Indirectly involved in the production of trans-acting small interfering RNAs (ta-siRNAs) derived from the TAS1, TAS2 or TAS3 endogenous transcripts by participating in the production of their initiating miRNAs. Involved in the processing of natural siRNAs (nat-siRNAs, derived from cis-natural antisense transcripts) by cleaving 24 nucleotide nat-siRNAs into 21 nucleotide nat-siRNAs. Can produce RDR6-dependent endogenous ta-siRNAs derived from TAS1 and TAS2. Required for the production of 30-40 nucleotide bacterial-induced long siRNAs (lsiRNA). Acts redundantly with DICER-LIKE 3 (DCL3) to promote flowering via repression of FLOWERING LOCUS C (FLC). Represses antiviral RNA silencing through negative regulation of the expression of DCL4 and DCL3. The protein is Endoribonuclease Dicer homolog 1 (DCL1) of Arabidopsis thaliana (Mouse-ear cress).